A 616-amino-acid polypeptide reads, in one-letter code: Dihydroxy-acid dehydratase (616 aa).

Asp-81 is a binding site for Mg(2+). Cys-122 contributes to the [2Fe-2S] cluster binding site. Mg(2+) contacts are provided by Asp-123 and Lys-124. Lys-124 is modified (N6-carboxylysine). Cys-195 is a binding site for [2Fe-2S] cluster. A Mg(2+)-binding site is contributed by Glu-491. The Proton acceptor role is filled by Ser-517.

This sequence belongs to the IlvD/Edd family. As to quaternary structure, homodimer. [2Fe-2S] cluster is required as a cofactor. It depends on Mg(2+) as a cofactor.

The catalysed reaction is (2R)-2,3-dihydroxy-3-methylbutanoate = 3-methyl-2-oxobutanoate + H2O. The enzyme catalyses (2R,3R)-2,3-dihydroxy-3-methylpentanoate = (S)-3-methyl-2-oxopentanoate + H2O. It participates in amino-acid biosynthesis; L-isoleucine biosynthesis; L-isoleucine from 2-oxobutanoate: step 3/4. It functions in the pathway amino-acid biosynthesis; L-valine biosynthesis; L-valine from pyruvate: step 3/4. Its function is as follows. Functions in the biosynthesis of branched-chain amino acids. Catalyzes the dehydration of (2R,3R)-2,3-dihydroxy-3-methylpentanoate (2,3-dihydroxy-3-methylvalerate) into 2-oxo-3-methylpentanoate (2-oxo-3-methylvalerate) and of (2R)-2,3-dihydroxy-3-methylbutanoate (2,3-dihydroxyisovalerate) into 2-oxo-3-methylbutanoate (2-oxoisovalerate), the penultimate precursor to L-isoleucine and L-valine, respectively. The sequence is that of Dihydroxy-acid dehydratase from Tolumonas auensis (strain DSM 9187 / NBRC 110442 / TA 4).